Here is a 236-residue protein sequence, read N- to C-terminus: Leucyl/phenylalanyl-tRNA--protein transferase (236 aa).

This sequence belongs to the L/F-transferase family.

The protein resides in the cytoplasm. The catalysed reaction is N-terminal L-lysyl-[protein] + L-leucyl-tRNA(Leu) = N-terminal L-leucyl-L-lysyl-[protein] + tRNA(Leu) + H(+). The enzyme catalyses N-terminal L-arginyl-[protein] + L-leucyl-tRNA(Leu) = N-terminal L-leucyl-L-arginyl-[protein] + tRNA(Leu) + H(+). It catalyses the reaction L-phenylalanyl-tRNA(Phe) + an N-terminal L-alpha-aminoacyl-[protein] = an N-terminal L-phenylalanyl-L-alpha-aminoacyl-[protein] + tRNA(Phe). Functionally, functions in the N-end rule pathway of protein degradation where it conjugates Leu, Phe and, less efficiently, Met from aminoacyl-tRNAs to the N-termini of proteins containing an N-terminal arginine or lysine. This is Leucyl/phenylalanyl-tRNA--protein transferase from Yersinia pseudotuberculosis serotype O:1b (strain IP 31758).